The primary structure comprises 506 residues: FAD-linked oxidoreductase chry5 (506 aa).

A signal peptide spans 1–17 (MHLQALTGLATLAVTAA). The 183-residue stretch at 59 to 241 (LDKPTVNIVA…TSVTSKTYDA (183 aa)) folds into the FAD-binding PCMH-type domain. 5 N-linked (GlcNAc...) asparagine glycosylation sites follow: Asn205, Asn272, Asn281, Asn389, and Asn431.

This sequence belongs to the oxygen-dependent FAD-linked oxidoreductase family. FAD serves as cofactor.

It participates in pigment biosynthesis. In terms of biological role, FAD-linked oxidoreductase; part of the gene cluster that mediates the biosynthesis of the yellow pigment chrysogine. Pyruvic acid and anthranilic acid are likely substrates for the nonribosomal peptide synthetase chry1/NRPS14, with pyruvic acid adenylated by the first A domain and anthranilic acid by the second. If pyruvic acid and anthranilic acid are merged and released from chry1/NRPS14 by hydrolysis, a subsequent amidation would lead to 2-pyruvoylaminobenzamide. This process is probably catalyzed by the amidotransferase chry2 using glutamine as amino donor. The dehydrogenase chry5 that has a terminal berberine bridge domain for C-N cyclization could catalyze the cyclization of 2-pyruvoylaminobenzamide to yield acetyl-4(3H)-quinazolidinone. A final reduction of acetyl-4(3H)-quinazolidinone catalyzed by the oxidoreductase chry4 would result in chrysogine. The sequence is that of FAD-linked oxidoreductase chry5 from Gibberella zeae (strain ATCC MYA-4620 / CBS 123657 / FGSC 9075 / NRRL 31084 / PH-1) (Wheat head blight fungus).